We begin with the raw amino-acid sequence, 187 residues long: Choriogonadotropin subunit beta variant 1 (187 aa).

The N-terminal stretch at 1–50 is a signal peptide; the sequence is MSTFPVLAEDIPLRERHVKGRVDPHFRAPKMEMFQRLLLLLLLSMGGTWA. 6 disulfide bridges follow: C59–C107, C73–C122, C76–C160, C84–C138, C88–C140, and C143–C150. N-linked (GlcNAc...) asparagine glycosylation is found at N63 and N80. The tract at residues 161–187 is disordered; it reads DDPRFQDSSSSKAPPPSLPSPSRLPGP. Over residues 173–187 the composition is skewed to pro residues; that stretch reads APPPSLPSPSRLPGP.

This sequence belongs to the glycoprotein hormones subunit beta family. Expressed in placenta, testis and pituitary.

The protein localises to the secreted. This is Choriogonadotropin subunit beta variant 1 (CGB1) from Homo sapiens (Human).